Consider the following 497-residue polypeptide: Protein nucleotidyltransferase YdiU (497 aa).

ATP contacts are provided by G88, G90, R91, K110, D122, G123, R173, and R180. The Proton acceptor role is filled by D249. Positions 250 and 259 each coordinate Mg(2+). D259 serves as a coordination point for ATP. Residues 477–497 (FARYAEPPEGGGRGYRTFCGT) are disordered.

The protein belongs to the SELO family. Mg(2+) serves as cofactor. The cofactor is Mn(2+).

It catalyses the reaction L-seryl-[protein] + ATP = 3-O-(5'-adenylyl)-L-seryl-[protein] + diphosphate. The enzyme catalyses L-threonyl-[protein] + ATP = 3-O-(5'-adenylyl)-L-threonyl-[protein] + diphosphate. It carries out the reaction L-tyrosyl-[protein] + ATP = O-(5'-adenylyl)-L-tyrosyl-[protein] + diphosphate. The catalysed reaction is L-histidyl-[protein] + UTP = N(tele)-(5'-uridylyl)-L-histidyl-[protein] + diphosphate. It catalyses the reaction L-seryl-[protein] + UTP = O-(5'-uridylyl)-L-seryl-[protein] + diphosphate. The enzyme catalyses L-tyrosyl-[protein] + UTP = O-(5'-uridylyl)-L-tyrosyl-[protein] + diphosphate. In terms of biological role, nucleotidyltransferase involved in the post-translational modification of proteins. It can catalyze the addition of adenosine monophosphate (AMP) or uridine monophosphate (UMP) to a protein, resulting in modifications known as AMPylation and UMPylation. The polypeptide is Protein nucleotidyltransferase YdiU (Methylorubrum extorquens (strain PA1) (Methylobacterium extorquens)).